A 250-amino-acid polypeptide reads, in one-letter code: PF03932 family protein CutC (250 aa).

It belongs to the CutC family.

The protein resides in the cytoplasm. In Vibrio vulnificus (strain CMCP6), this protein is PF03932 family protein CutC.